Consider the following 487-residue polypeptide: UDP-N-acetylmuramate--L-alanine ligase (487 aa).

129–135 (GTHGKTT) is a binding site for ATP.

Belongs to the MurCDEF family.

It is found in the cytoplasm. It catalyses the reaction UDP-N-acetyl-alpha-D-muramate + L-alanine + ATP = UDP-N-acetyl-alpha-D-muramoyl-L-alanine + ADP + phosphate + H(+). The protein operates within cell wall biogenesis; peptidoglycan biosynthesis. Cell wall formation. This Aliivibrio salmonicida (strain LFI1238) (Vibrio salmonicida (strain LFI1238)) protein is UDP-N-acetylmuramate--L-alanine ligase.